The primary structure comprises 518 residues: Glutamate--cysteine ligase (518 aa).

Belongs to the glutamate--cysteine ligase type 1 family. Type 1 subfamily.

The enzyme catalyses L-cysteine + L-glutamate + ATP = gamma-L-glutamyl-L-cysteine + ADP + phosphate + H(+). It functions in the pathway sulfur metabolism; glutathione biosynthesis; glutathione from L-cysteine and L-glutamate: step 1/2. This Shigella boydii serotype 4 (strain Sb227) protein is Glutamate--cysteine ligase.